The following is a 241-amino-acid chain: Tetraspanin-1 (241 aa).

Residues 1-11 lie on the Cytoplasmic side of the membrane; sequence MGCFNFIKVMM. The chain crosses the membrane as a helical span at residues 12–32; the sequence is ILFNMLIFLCGAALLAVGIWV. Over 33–52 the chain is Extracellular; that stretch reads SVDGPSFVKIFGPMSSSAMQ. A helical membrane pass occupies residues 53–73; it reads FVNVGYFLIAAGAVLFALGFL. Residues 74 to 88 lie on the Cytoplasmic side of the membrane; it reads GCYGAQTESKCALMT. The helical transmembrane segment at 89-109 threads the bilayer; sequence FFFILLLIFIAEVAAAVVALV. Over 110–211 the chain is Extracellular; sequence YTTLAENFLT…KQLLYDIRTN (102 aa). N-linked (GlcNAc...) asparagine glycosylation is found at Asn141, Asn154, Asn167, Asn180, Asn189, and Asn194. A helical transmembrane segment spans residues 212-232; sequence AVTVGGVAAGIGGLELAAMIV. Residues 233–241 lie on the Cytoplasmic side of the membrane; sequence SMYLYCNLE.

This sequence belongs to the tetraspanin (TM4SF) family. Interacts with SLC19A2. Interacts with NTRK1/TRKA.

The protein localises to the lysosome membrane. In terms of biological role, structural component of specialized membrane microdomains known as tetraspanin-enriched microdomains (TERMs), which act as platforms for receptor clustering and signaling. Participates thereby in diverse biological functions such as cell signal transduction, adhesion, migration and protein trafficking. Regulates neuronal differentiation in response to NGF by facilitating NGF-mediated activation of NTRK1/TRKA receptor tyrosine kinase and subsequent downstream signaling pathways. Plays a role in the inhibition of TNFalpha-induced apoptosis. Mechanistically, inhibits the NF-kappa-B signaling pathway by blocking phosphorylation of CHUK. Also promotes the stability of the thiamine transporter 1/SLC19A2 in intestinal epithelial cells leading to an increase of thiamine uptake process. The protein is Tetraspanin-1 (TSPAN1) of Bos taurus (Bovine).